The following is a 485-amino-acid chain: Probable glycine dehydrogenase (decarboxylating) subunit 2 (485 aa).

Lysine 273 bears the N6-(pyridoxal phosphate)lysine mark.

Belongs to the GcvP family. C-terminal subunit subfamily. The glycine cleavage system is composed of four proteins: P, T, L and H. In this organism, the P 'protein' is a heterodimer of two subunits. Requires pyridoxal 5'-phosphate as cofactor.

The enzyme catalyses N(6)-[(R)-lipoyl]-L-lysyl-[glycine-cleavage complex H protein] + glycine + H(+) = N(6)-[(R)-S(8)-aminomethyldihydrolipoyl]-L-lysyl-[glycine-cleavage complex H protein] + CO2. Functionally, the glycine cleavage system catalyzes the degradation of glycine. The P protein binds the alpha-amino group of glycine through its pyridoxal phosphate cofactor; CO(2) is released and the remaining methylamine moiety is then transferred to the lipoamide cofactor of the H protein. The sequence is that of Probable glycine dehydrogenase (decarboxylating) subunit 2 from Bacillus licheniformis (strain ATCC 14580 / DSM 13 / JCM 2505 / CCUG 7422 / NBRC 12200 / NCIMB 9375 / NCTC 10341 / NRRL NRS-1264 / Gibson 46).